Consider the following 367-residue polypeptide: MTSTQRTLMVMAGGTGGHVFPGLAVAHRMQAQGWRVVWLGNPAGMEATLVPRHGIPMEYVHFGGLRGKGLATKFALPFNLLRACAQSLRALRRVKPDVVLGMGGYITFPAGLVTVLTGRPLVLHEQNSIAGLTNKVLAKLAKRVLVAFPGALPNAEWTGNPIRTELARTEPPQARYAARSGKLRLLVVGGSLGAAALNEVVPRALALLAPDERPQVVHQAGAKHIDTLKENYEAAGLSCGSDVALVPFIDDMASAYANADLVICRSGAMTVAEIAAVGVAALFVPFPHAVDDHQTTNAEFLAEQGAAVLVQQRDLSAELLADWLRGQSRDSLAAMAERSRSLAKPDATDEVARVCAAVAGANLEGKQ.

Residues threonine 15 to glycine 17, asparagine 127, arginine 163, serine 191, isoleucine 249, and glutamine 294 each bind UDP-N-acetyl-alpha-D-glucosamine.

It belongs to the glycosyltransferase 28 family. MurG subfamily.

It is found in the cell inner membrane. It carries out the reaction di-trans,octa-cis-undecaprenyl diphospho-N-acetyl-alpha-D-muramoyl-L-alanyl-D-glutamyl-meso-2,6-diaminopimeloyl-D-alanyl-D-alanine + UDP-N-acetyl-alpha-D-glucosamine = di-trans,octa-cis-undecaprenyl diphospho-[N-acetyl-alpha-D-glucosaminyl-(1-&gt;4)]-N-acetyl-alpha-D-muramoyl-L-alanyl-D-glutamyl-meso-2,6-diaminopimeloyl-D-alanyl-D-alanine + UDP + H(+). Its pathway is cell wall biogenesis; peptidoglycan biosynthesis. Its function is as follows. Cell wall formation. Catalyzes the transfer of a GlcNAc subunit on undecaprenyl-pyrophosphoryl-MurNAc-pentapeptide (lipid intermediate I) to form undecaprenyl-pyrophosphoryl-MurNAc-(pentapeptide)GlcNAc (lipid intermediate II). The protein is UDP-N-acetylglucosamine--N-acetylmuramyl-(pentapeptide) pyrophosphoryl-undecaprenol N-acetylglucosamine transferase of Burkholderia pseudomallei (strain 1710b).